Consider the following 355-residue polypeptide: Aminopeptidase N (355 aa).

Substrate is bound by residues E156 and 290 to 294 (GAMEN). H326 provides a ligand contact to Zn(2+). E327 (proton acceptor) is an active-site residue. Zn(2+)-binding residues include H330 and E349. A substrate-binding site is contributed by E349.

This sequence belongs to the peptidase M1 family. It depends on Zn(2+) as a cofactor.

The protein localises to the cytoplasm. It catalyses the reaction Release of an N-terminal amino acid, Xaa-|-Yaa- from a peptide, amide or arylamide. Xaa is preferably Ala, but may be most amino acids including Pro (slow action). When a terminal hydrophobic residue is followed by a prolyl residue, the two may be released as an intact Xaa-Pro dipeptide.. In terms of biological role, aminopeptidase N is involved in the degradation of intracellular peptides generated by protein breakdown during normal growth as well as in response to nutrient starvation. The protein is Aminopeptidase N (pepN) of Acetobacter pasteurianus (Acetobacter turbidans).